An 886-amino-acid polypeptide reads, in one-letter code: Phycobiliprotein ApcE (886 aa).

Residue cysteine 187 participates in (2R,3E)-phycocyanobilin binding. PBS-linker domains follow at residues 244 to 424 (DLQG…FRKV), 496 to 678 (QVRP…ISSK), and 695 to 876 (NDIQ…SVVV).

The protein belongs to the phycobilisome linker protein family. Contains one covalently linked bilin chromophore. This protein autochromophorylates (Potential).

Its subcellular location is the plastid. It is found in the chloroplast thylakoid membrane. This protein is postulated to act both as terminal energy acceptor and as a linker polypeptide that stabilizes the phycobilisome architecture. May have intrinsic bilin lyase activity. The protein is Phycobiliprotein ApcE (apcE) of Porphyra purpurea (Red seaweed).